Here is a 399-residue protein sequence, read N- to C-terminus: MAAPQNYLAVIKVIGVGGGGVNAINRMIEVGLKGVEFIAINTDAQALLMSDADVKLDVGRELTRGLGAGANPAVGRKAAEDHREEIEEVLKGADMVFVTAGEGGGTGTGGAPVVANIARSLGALTIGVVTRPFTFEGRRRANQAEDGIAELREEVDTLIVIPNDRLLSISDRQVSVLDAFKSADQVLLSGVQGITDLITTPGLINLDFADVKSVMSEAGSALMGIGSARGDDRAVAAAEMAISSPLLEASIDGARGVLLSISGGSDLGLFEINEAAQLVSEAAHPEANIIFGAVIDDALGDEVRVTVIAAGFDGGQPPSKRDNVLGSSSAKREEPTPARPSESRPSFGSLGSVKPKEEPEPAPVPEPVADLPVSPPPVPPSRTYSDSAAEELDVPDFLK.

GTP is bound by residues 18–22 (GGGVN), 105–107 (GTG), E136, R140, and D184. Positions 311-399 (GFDGGQPPSK…EELDVPDFLK (89 aa)) are disordered. Residues 388 to 399 (AAEELDVPDFLK) are compositionally biased toward acidic residues.

It belongs to the FtsZ family. Homodimer. Polymerizes to form a dynamic ring structure in a strictly GTP-dependent manner. Interacts directly with several other division proteins.

The protein resides in the cytoplasm. Essential cell division protein that forms a contractile ring structure (Z ring) at the future cell division site. The regulation of the ring assembly controls the timing and the location of cell division. One of the functions of the FtsZ ring is to recruit other cell division proteins to the septum to produce a new cell wall between the dividing cells. Binds GTP and shows GTPase activity. This is Cell division protein FtsZ from Streptomyces coelicolor (strain ATCC BAA-471 / A3(2) / M145).